The following is a 316-amino-acid chain: Pantothenate kinase (316 aa).

Residue 95 to 102 (GSVAVGKS) coordinates ATP.

Belongs to the prokaryotic pantothenate kinase family.

The protein localises to the cytoplasm. It carries out the reaction (R)-pantothenate + ATP = (R)-4'-phosphopantothenate + ADP + H(+). It functions in the pathway cofactor biosynthesis; coenzyme A biosynthesis; CoA from (R)-pantothenate: step 1/5. In Shigella sonnei (strain Ss046), this protein is Pantothenate kinase.